Reading from the N-terminus, the 792-residue chain is MITVNPDGKIMVRRCLVTLRPFRLFVLGIGFFTLCFLMTSLGGQFSARRLGDSPFTIRTEVMGGPESRGVLRKMSDLLELMVKRMDALARLENSSELHRAGGDLHFPADRMPPGAGLMERIQAIAQNVSDIAVKVDQILRHSLLLHSKVSEGRRDQCEAPSDPKFPDCSGKVEWMRARWTSDPCYAFFGVDGTECSFLIYLSEVEWFCPPLPWRNQTAAQRAPKPLPKVQAVFRSNLSHLLDLMGSGKESLIFMKKRTKRLTAQWALAAQRLAQKLGATQRDQKQILVHIGFLTEESGDVFSPRVLKGGPLGEMVQWADILTALYVLGHGLRVTVSLKELQSNLGVPPGRGSCPLTMPLPFDLIYTDYHGLQQMKRHMGLSFKKYRCRIRVIDTFGTEPAYNHEEYATLHGYRTNWGYWNLNPKQFMTMFPHTPDNSFMGFVSEELNETEKRLIKGGKASNMAVVYGKEASIWKLQGKEKFLGILNKYMEIHGTVYYESQRPPEVPAFVKNHGLLPQPEFQQLLRKAKLFIGFGFPYEGPAPLEAIANGCIFLQSRFSPPHSSLNHEFFRGKPTSREVFSQHPYAENFIGKPHVWTVDYNNSEEFEAAIKAIMRTQVDPYLPYEYTCEGMLERIHAYIQHQDFCRAPDPALPEAHAPQSPFVLAPNATHLEWARNTSLAPGAWPPAHALRAWLAVPGRACTDTCLDHGLICEPSFFPFLNSQDAFLKLQVPCDSTESEMNHLYPAFAQPGQECYLQKEPLLFSCAGSNTKYRRLCPCRDFRKGQVALCQGCL.

Residues methionine 1–leucine 24 are Cytoplasmic-facing. Residues phenylalanine 25–phenylalanine 45 form a helical; Signal-anchor for type II membrane protein membrane-spanning segment. Topologically, residues serine 46–leucine 792 are lumenal. An N-linked (GlcNAc...) asparagine glycan is attached at asparagine 127. 9 cysteine pairs are disulfide-bonded: cysteine 157–cysteine 195, cysteine 168–cysteine 208, cysteine 184–cysteine 353, cysteine 387–cysteine 644, cysteine 700–cysteine 775, cysteine 704–cysteine 777, cysteine 711–cysteine 764, cysteine 732–cysteine 753, and cysteine 788–cysteine 791.

The protein belongs to the glycosyltransferase 18 family. Mn(2+) is required as a cofactor. As to expression, predominantly expressed in brain. Expressed in all areas of the adult and fetal brain. Also expressed at much lower levels in testis, spleen and thymus.

The protein resides in the golgi apparatus membrane. The enzyme catalyses N(4)-{beta-D-GlcNAc-(1-&gt;2)-[beta-D-GlcNAc-(1-&gt;4)]-alpha-D-Man-(1-&gt;3)-[beta-D-GlcNAc-(1-&gt;2)-alpha-D-Man-(1-&gt;6)]-beta-D-Man-(1-&gt;4)-beta-D-GlcNAc-(1-&gt;4)-beta-D-GlcNAc}-L-asparaginyl-[protein] + UDP-N-acetyl-alpha-D-glucosamine = N(4)-{beta-D-GlcNAc-(1-&gt;2)-[beta-D-GlcNAc-(1-&gt;4)]-alpha-D-Man-(1-&gt;3)-[beta-D-GlcNAc-(1-&gt;2)-[beta-D-GlcNAc-(1-&gt;6)]-alpha-D-Man-(1-&gt;6)]-beta-D-Man-(1-&gt;4)-beta-D-GlcNAc-(1-&gt;4)-beta-D-GlcNAc}-L-asparaginyl-[protein] + UDP + H(+). It carries out the reaction 3-O-[N-acetyl-beta-D-glucosaminyl-(1-&gt;2)-alpha-D-mannosyl]-L-seryl-[protein] + UDP-N-acetyl-alpha-D-glucosamine = O(3)-{N-acetyl-beta-D-glucosaminyl-(1-&gt;2)-[N-acetyl-beta-D-glucosaminyl-(1-&gt;6)]-alpha-D-mannosyl}-L-seryl-[protein] + UDP + H(+). It catalyses the reaction 3-O-[N-acetyl-beta-D-glucosaminyl-(1-&gt;2)-alpha-D-mannosyl]-L-threonyl-[protein] + UDP-N-acetyl-alpha-D-glucosamine = O(3)-{N-acetyl-beta-D-glucosaminyl-(1-&gt;2)-[N-acetyl-beta-D-glucosaminyl-(1-&gt;6)]-alpha-D-mannosyl}-L-threonyl-[protein] + UDP + H(+). It participates in protein modification; protein glycosylation. In terms of biological role, glycosyltransferase that acts on alpha-linked mannose of N-glycans and O-mannosyl glycans. Catalyzes the transfer of N-acetylglucosamine (GlcNAc) to the beta 1-6 linkage of the mannose residue of GlcNAc-beta1,2-Man-alpha on both the alpha1,3- and alpha1,6-linked mannose arms in the core structure of N-glycan. Also acts on the GlcNAc-beta1,2-Man-alpha1-Ser/Thr moiety, forming a 2,6-branched structure in brain O-mannosyl glycan. Plays an active role in modulating integrin and laminin-dependent adhesion and migration of neuronal cells via its activity in the O-mannosyl glycan pathway. The sequence is that of Alpha-1,6-mannosylglycoprotein 6-beta-N-acetylglucosaminyltransferase B (MGAT5B) from Homo sapiens (Human).